Reading from the N-terminus, the 274-residue chain is Oxidoreductase stcQ (274 aa).

This sequence belongs to the avfA family.

The protein operates within mycotoxin biosynthesis; sterigmatocystin biosynthesis. Oxidoreductase; part of the gene cluster that mediates the biosynthesis of sterigmatocystin (ST), a polyketide-derived furanocoumarin which is part of the most toxic and carcinogenic compounds among the known mycotoxins. The first step in the biosynthesis of sterigmatocystin is the production of hexanoate by the fatty acid synthase (FAS) units stcJ and stcK. The polyketide backbone is assembled by the non-reducing polyketide synthase stcA by condensation of the starter hexanoyl-CoA and 7 malonyl-CoA extender units followed by cyclization and release of norsolorinic acid. Norsolorinic acid is the first stable intermediate in the biosynthesis of sterigmatocystin and is converted into averantin (AVN) by the ketoreductase stcE which reduces the hexanoate ketone to an alcohol. Averantin is then oxidized into 5'-hydroxyaverantin (HAVN) by the cytochrome P450 monooxygenase stcF. 5'-hydroxyaverantin is further converted to 5'-oxyaverantin (OAVN) by the 5'-hydroxyaverantin dehydrogenase stcG. The next step is the conversion of OAVN into averufin (AVF) which is catalyzed by a yet to be identified enzyme. The cytochrome P450 monooxygenase stcB and the flavin-binding monooxygenase stcW are both required for the conversion of averufin to 1-hydroxyversicolorone. The esterase stcI probably catalyzes the formation of versiconal hemiacetal acetate from 1-hydroxyversicolorone. The oxydoreductase stcN then probably catalyzes the biosynthetic step from versiconal to versicolorin B (VERB). The next step is performed by the versicolorin B desaturase stcL to produce versicolorin A (VERA). The ketoreductase stcU and the cytochrome P450 monooxygenase stcS are involved in the conversion of versicolorin A to demethylsterigmatocystin. The Baeyer-Villiger oxidas stcQ and the reductase stcR might be involved in the biosynthetic step from versicolorin A to demethylsterigmatocystin. The final step in the biosynthesis of sterigmatocystin is the methylation of demethylsterigmatocystin catalyzed by the methyltransferase stcP. The polypeptide is Oxidoreductase stcQ (Emericella nidulans (strain FGSC A4 / ATCC 38163 / CBS 112.46 / NRRL 194 / M139) (Aspergillus nidulans)).